The following is a 338-amino-acid chain: Putative peptide import ATP-binding protein BruAb2_0796 (338 aa).

The region spanning 7 to 263 (LDIEGLRTVF…PRHPYTMGLL (257 aa)) is the ABC transporter domain. 43–50 (GESGSGKS) contacts ATP.

Belongs to the ABC transporter superfamily. In terms of assembly, the complex is composed of two ATP-binding proteins (BruAb2_0796 and BruAb2_0797), two transmembrane proteins (BruAb2_0794) and a solute-binding protein (BruAb2_0792).

Its subcellular location is the cell inner membrane. In terms of biological role, probably part of an ABC transporter complex that could be involved in peptide import. Probably responsible for energy coupling to the transport system. The protein is Putative peptide import ATP-binding protein BruAb2_0796 of Brucella abortus biovar 1 (strain 9-941).